The following is a 142-amino-acid chain: Peptide methionine sulfoxide reductase MsrB (142 aa).

The 124-residue stretch at 2-125 folds into the MsrB domain; that stretch reads LKKDKSELTD…NSAAIQFIPY (124 aa). The active-site Nucleophile is the C114.

The protein belongs to the MsrB Met sulfoxide reductase family.

It carries out the reaction L-methionyl-[protein] + [thioredoxin]-disulfide + H2O = L-methionyl-(R)-S-oxide-[protein] + [thioredoxin]-dithiol. The chain is Peptide methionine sulfoxide reductase MsrB from Staphylococcus aureus (strain USA300).